A 285-amino-acid chain; its full sequence is Probable endonuclease 4 (285 aa).

H69, H109, E145, D179, H182, H216, D229, H231, and E261 together coordinate Zn(2+).

This sequence belongs to the AP endonuclease 2 family. Requires Zn(2+) as cofactor.

The catalysed reaction is Endonucleolytic cleavage to 5'-phosphooligonucleotide end-products.. Its function is as follows. Endonuclease IV plays a role in DNA repair. It cleaves phosphodiester bonds at apurinic or apyrimidinic (AP) sites, generating a 3'-hydroxyl group and a 5'-terminal sugar phosphate. The polypeptide is Probable endonuclease 4 (Yersinia pseudotuberculosis serotype O:1b (strain IP 31758)).